Consider the following 114-residue polypeptide: Large ribosomal subunit protein uL22 (114 aa).

Belongs to the universal ribosomal protein uL22 family. As to quaternary structure, part of the 50S ribosomal subunit.

In terms of biological role, this protein binds specifically to 23S rRNA; its binding is stimulated by other ribosomal proteins, e.g. L4, L17, and L20. It is important during the early stages of 50S assembly. It makes multiple contacts with different domains of the 23S rRNA in the assembled 50S subunit and ribosome. Functionally, the globular domain of the protein is located near the polypeptide exit tunnel on the outside of the subunit, while an extended beta-hairpin is found that lines the wall of the exit tunnel in the center of the 70S ribosome. The chain is Large ribosomal subunit protein uL22 from Aeromonas salmonicida (strain A449).